Reading from the N-terminus, the 234-residue chain is UPF0758 protein Smlt0399 (234 aa).

Residues 103–225 enclose the MPN domain; that stretch reads VGNNPAAVGR…PVSFAERGLL (123 aa). Positions 174, 176, and 187 each coordinate Zn(2+). The short motif at 174–187 is the JAMM motif element; that stretch reads HNHPSGDPEPSSAD.

This sequence belongs to the UPF0758 family.

The polypeptide is UPF0758 protein Smlt0399 (Stenotrophomonas maltophilia (strain K279a)).